Consider the following 72-residue polypeptide: Large ribosomal subunit protein uL29 (72 aa).

It belongs to the universal ribosomal protein uL29 family.

The sequence is that of Large ribosomal subunit protein uL29 (rpmC) from Chlamydia pneumoniae (Chlamydophila pneumoniae).